An 803-amino-acid polypeptide reads, in one-letter code: Carbon monoxide dehydrogenase large chain (803 aa).

R384 carries the post-translational modification 4-hydroxyarginine. Residue C385 participates in Cu(+) binding. A Mo-molybdopterin cytosine dinucleotide-binding site is contributed by E757.

Dimer of heterotrimers. Each heterotrimer consists of a large, a medium and a small subunit. Cu(+) serves as cofactor. Mo-molybdopterin cytosine dinucleotide is required as a cofactor.

It catalyses the reaction CO + a quinone + H2O = a quinol + CO2. Its function is as follows. Catalyzes the oxidation of carbon monoxide to carbon dioxide. This is Carbon monoxide dehydrogenase large chain (cutL) from Hydrogenophaga pseudoflava (Pseudomonas carboxydoflava).